The primary structure comprises 353 residues: Photosystem II protein D1 (353 aa).

Threonine 2 carries the post-translational modification N-acetylthreonine. Threonine 2 is subject to Phosphothreonine. 3 helical membrane-spanning segments follow: residues 29 to 46 (YIGW…TATS), 118 to 133 (HFLL…EWEL), and 142 to 156 (WIAV…AATA). Chlorophyll a is bound at residue histidine 118. Tyrosine 126 is a pheophytin a binding site. Aspartate 170 and glutamate 189 together coordinate [CaMn4O5] cluster. A helical membrane pass occupies residues 197-218 (FHMLGVAGVFGGSLFSAMHGSL). Histidine 198 serves as a coordination point for chlorophyll a. A quinone is bound by residues histidine 215 and 264–265 (SF). Histidine 215 contacts Fe cation. Histidine 272 lines the Fe cation pocket. The chain crosses the membrane as a helical span at residues 274–288 (FLAAWPVVGIWFTAL). [CaMn4O5] cluster is bound by residues histidine 332, glutamate 333, aspartate 342, and alanine 344. Positions 345 to 353 (AVEAPSTNG) are excised as a propeptide.

The protein belongs to the reaction center PufL/M/PsbA/D family. PSII is composed of 1 copy each of membrane proteins PsbA, PsbB, PsbC, PsbD, PsbE, PsbF, PsbH, PsbI, PsbJ, PsbK, PsbL, PsbM, PsbT, PsbX, PsbY, PsbZ, Psb30/Ycf12, at least 3 peripheral proteins of the oxygen-evolving complex and a large number of cofactors. It forms dimeric complexes. The D1/D2 heterodimer binds P680, chlorophylls that are the primary electron donor of PSII, and subsequent electron acceptors. It shares a non-heme iron and each subunit binds pheophytin, quinone, additional chlorophylls, carotenoids and lipids. D1 provides most of the ligands for the Mn4-Ca-O5 cluster of the oxygen-evolving complex (OEC). There is also a Cl(-1) ion associated with D1 and D2, which is required for oxygen evolution. The PSII complex binds additional chlorophylls, carotenoids and specific lipids. serves as cofactor. Tyr-161 forms a radical intermediate that is referred to as redox-active TyrZ, YZ or Y-Z. Post-translationally, C-terminally processed by CTPA; processing is essential to allow assembly of the oxygen-evolving complex and thus photosynthetic growth.

The protein localises to the plastid. Its subcellular location is the chloroplast thylakoid membrane. It catalyses the reaction 2 a plastoquinone + 4 hnu + 2 H2O = 2 a plastoquinol + O2. Functionally, photosystem II (PSII) is a light-driven water:plastoquinone oxidoreductase that uses light energy to abstract electrons from H(2)O, generating O(2) and a proton gradient subsequently used for ATP formation. It consists of a core antenna complex that captures photons, and an electron transfer chain that converts photonic excitation into a charge separation. The D1/D2 (PsbA/PsbD) reaction center heterodimer binds P680, the primary electron donor of PSII as well as several subsequent electron acceptors. The protein is Photosystem II protein D1 of Drimys granadensis.